Consider the following 161-residue polypeptide: UPF0262 protein mll6455 (161 aa).

It belongs to the UPF0262 family.

This is UPF0262 protein mll6455 from Mesorhizobium japonicum (strain LMG 29417 / CECT 9101 / MAFF 303099) (Mesorhizobium loti (strain MAFF 303099)).